The following is a 388-amino-acid chain: Cystathionine gamma-synthase (388 aa).

Lys-208 bears the N6-(pyridoxal phosphate)lysine mark.

It belongs to the trans-sulfuration enzymes family. Homotetramer. It depends on pyridoxal 5'-phosphate as a cofactor.

Its subcellular location is the cytoplasm. It carries out the reaction O-succinyl-L-homoserine + L-cysteine = L,L-cystathionine + succinate + H(+). Its function is as follows. Catalyzes the formation of L-cystathionine from O-succinyl-L-homoserine (OSHS) and L-cysteine, via a gamma-replacement reaction. In the absence of thiol, catalyzes gamma-elimination to form 2-oxobutanoate, succinate and ammonia. This is Cystathionine gamma-synthase (metB) from Mycobacterium leprae (strain TN).